The chain runs to 587 residues: MKDTIRQLIQQALDQLTADGTLPAGLTPDIQVENTKDRSHGDFASNIAMMLAKPAGMKPRDLAARLVEAIPAHEQLAKVEIAGPGFLNFFQDHVWLAASLDRALADERLGVRKAGPAQRVVIDLSSPNLAKEMHVGHLRSTIIGDAVARVLEFLGDTVIRQNHVGDWGTQFGMLLAYLEEQPVDAEAELHDLEVFYRAAKKRFDESPEFADRARELVVKLQAGDPDCLRLWTRFNEISLSHCQKVYDRLGVKLSMADVMGESAYNDDLAQVVADLTAKGLLTEDNGALCVFLEEFRNAEGNPLPVIVQKAGGGYLYATTDLAAMRYRHNVLHADRVLYFVDQRQALHFQQVFEVARRAGFVPAGMELEHMGFGTMNGADGRPFKTRDGGTVKLIDLLEEAESRAYALVKERNEQRAERGEEPFDEVQLREIGRVVGIDSVKYADLSKHRTSDYSFNFELMLSFEGNTAPYLLYACTRVASVFRKLGQGREQLGGKIVLEQPQELALAAQLAQFGDLINNVALKGVPHLLCAYLYELAGLFSSFYEHCPILTAEDPAQKDSRLRLAALTGRTLEQGLELLGLKTLERM.

The short motif at 127-137 (PNLAKEMHVGH) is the 'HIGH' region element.

It belongs to the class-I aminoacyl-tRNA synthetase family. As to quaternary structure, monomer.

The protein localises to the cytoplasm. It catalyses the reaction tRNA(Arg) + L-arginine + ATP = L-arginyl-tRNA(Arg) + AMP + diphosphate. In Pseudomonas aeruginosa (strain UCBPP-PA14), this protein is Arginine--tRNA ligase.